The primary structure comprises 1925 residues: Plexin-D1 (1925 aa).

Low complexity predominate over residues 1-21 (MARRAAGGAPPSARAAAAVPL). A disordered region spans residues 1–26 (MARRAAGGAPPSARAAAAVPLRPRPH). The first 48 residues, 1–48 (MARRAAGGAPPSARAAAAVPLRPRPHSRGPGLLPLPLLLLLGAARAGA), serve as a signal peptide directing secretion. Residues 49-548 (LEIQRRFPSP…TSHQMARVKV (500 aa)) form the Sema domain. The Extracellular portion of the chain corresponds to 49–1271 (LEIQRRFPSP…TLQLGGSETA (1223 aa)). Cystine bridges form between Cys-106–Cys-116 and Cys-142–Cys-150. 2 N-linked (GlcNAc...) asparagine glycosylation sites follow: Asn-157 and Asn-226. 2 disulfide bridges follow: Cys-324–Cys-447 and Cys-347–Cys-391. Residue Asn-483 is glycosylated (N-linked (GlcNAc...) asparagine). 5 disulfide bridges follow: Cys-551–Cys-568, Cys-557–Cys-602, Cys-560–Cys-577, Cys-571–Cys-583, and Cys-639–Cys-663. IPT/TIG domains follow at residues 893 to 977 (PEIR…SREQ), 983 to 1065 (PTVH…NLTF), and 1071 to 1145 (PVIT…FING). An N-linked (GlcNAc...) asparagine glycan is attached at Asn-967. The N-linked (GlcNAc...) asparagine glycan is linked to Asn-1120. Residues 1272 to 1292 (IVVSIVICSVLLLLSVVALFV) form a helical membrane-spanning segment. Residues 1293–1925 (FCTKSRRAER…NNIYECYSEA (633 aa)) are Cytoplasmic-facing.

The protein belongs to the plexin family. Interacts with NRP1 and SEMA4A. Interacts with SH3BP1; they dissociate upon SEMA3E binding to PLXND1 allowing SH3BP1 to transduce downstream signal through RAC1 inactivation. As to expression, detected in embryonic heart and vascular endothelium, brain, dorsal root ganglia, adrenal gland, lung mesenchyme, small intestine and in the ossification centers of vertebral bodies.

The protein resides in the cell membrane. Its subcellular location is the cell projection. It is found in the lamellipodium membrane. Functionally, cell surface receptor for SEMA4A and for class 3 semaphorins, such as SEMA3A, SEMA3C and SEMA3E. Plays an important role in cell-cell signaling, and in regulating the migration of a wide spectrum of cell types. Regulates the migration of thymocytes in the medulla. Regulates endothelial cell migration. Plays an important role in ensuring the specificity of synapse formation. Mediates anti-angiogenic signaling in response to SEMA3E. Required for normal development of the heart and vasculature. This is Plexin-D1 (Plxnd1) from Mus musculus (Mouse).